The following is a 430-amino-acid chain: Adenylosuccinate synthetase (430 aa).

GTP-binding positions include 12–18 (GDEGKGK) and 40–42 (GHT). The Proton acceptor role is filled by D13. D13 and G40 together coordinate Mg(2+). IMP is bound by residues 13 to 16 (DEGK), 38 to 41 (NAGH), T128, R142, Q223, T238, and R302. H41 serves as the catalytic Proton donor. Residue 298–304 (TTTGRPR) participates in substrate binding. GTP-binding positions include R304, 330–332 (SID), and 412–414 (SVG).

Belongs to the adenylosuccinate synthetase family. As to quaternary structure, homodimer. It depends on Mg(2+) as a cofactor.

It localises to the cytoplasm. The catalysed reaction is IMP + L-aspartate + GTP = N(6)-(1,2-dicarboxyethyl)-AMP + GDP + phosphate + 2 H(+). The protein operates within purine metabolism; AMP biosynthesis via de novo pathway; AMP from IMP: step 1/2. Functionally, plays an important role in the de novo pathway of purine nucleotide biosynthesis. Catalyzes the first committed step in the biosynthesis of AMP from IMP. The sequence is that of Adenylosuccinate synthetase from Streptococcus pyogenes serotype M3 (strain ATCC BAA-595 / MGAS315).